Consider the following 704-residue polypeptide: ATP-dependent zinc metalloprotease FtsH (704 aa).

The Cytoplasmic segment spans residues 1–17; it reads MADSAKTPRGKKRRPFT. Residues 18-38 traverse the membrane as a helical segment; it reads GLALWIIVALLLGMAMFSLFG. Over 39-127 the chain is Extracellular; sequence RDGYQQIDTQ…DEIASSSWWS (89 aa). Residues 128-148 traverse the membrane as a helical segment; it reads TLLLSFLPLLIFIGLFWFLIM. Residues 149 to 704 lie on the Cytoplasmic side of the membrane; that stretch reads NAQGGGKAMQ…GSAGTDGTGR (556 aa). 217–224 provides a ligand contact to ATP; the sequence is GPPGTGKT. Residue histidine 439 coordinates Zn(2+). Residue glutamate 440 is part of the active site. Zn(2+) is bound by residues histidine 443 and aspartate 515. The disordered stretch occupies residues 624–704; the sequence is PREVWISSTE…GSAGTDGTGR (81 aa). The span at 681–704 shows a compositional bias: gly residues; that stretch reads PHGGEPGGGGYGYDGSAGTDGTGR.

It in the central section; belongs to the AAA ATPase family. This sequence in the C-terminal section; belongs to the peptidase M41 family. In terms of assembly, homohexamer. Requires Zn(2+) as cofactor.

It localises to the cell membrane. Functionally, acts as a processive, ATP-dependent zinc metallopeptidase for both cytoplasmic and membrane proteins. Plays a role in the quality control of integral membrane proteins. In Brachybacterium faecium (strain ATCC 43885 / DSM 4810 / JCM 11609 / LMG 19847 / NBRC 14762 / NCIMB 9860 / 6-10), this protein is ATP-dependent zinc metalloprotease FtsH.